Reading from the N-terminus, the 205-residue chain is High frequency lysogenization protein HflD homolog (205 aa).

This sequence belongs to the HflD family.

The protein resides in the cytoplasm. It localises to the cell inner membrane. The sequence is that of High frequency lysogenization protein HflD homolog from Shewanella sp. (strain W3-18-1).